Reading from the N-terminus, the 554-residue chain is Rab GTPase-binding effector protein 2 (554 aa).

Disordered stretches follow at residues 1-28 (MAAA…SELS), 167-208 (IQRR…GPAA), and 371-395 (GLRA…DEAL). Basic and acidic residues predominate over residues 14 to 28 (PQEKQKDASESSELS). Residues 15-173 (QEKQKDASES…IQEIQRRPRQ (159 aa)) are a coiled coil. A phosphoserine mark is found at Ser-176, Ser-180, Ser-187, and Ser-191. Positions 274 to 509 (DSQWEQLQVE…QAELETSEQV (236 aa)) form a coiled coil.

The protein belongs to the rabaptin family. As to quaternary structure, heterodimer with RABGEF1. The dimer binds RAB5A that has been activated by GTP-binding. Interacts with SDCCAG8; this interaction is important for ciliogenesis regulation. Interacts with RAB4A; this interaction may mediate VEGFR2 cell surface expression.

The protein resides in the cytoplasm. Its subcellular location is the early endosome. It localises to the cytoskeleton. It is found in the microtubule organizing center. The protein localises to the centrosome. The protein resides in the cilium basal body. Functionally, plays a role in membrane trafficking and in homotypic early endosome fusion. Participates in arteriogenesis by regulating vascular endothelial growth factor receptor 2/VEGFR2 cell surface expression and endosomal trafficking. By interacting with SDCCAG8, localizes to centrosomes and plays a critical role in ciliogenesis. The polypeptide is Rab GTPase-binding effector protein 2 (Rabep2) (Mus musculus (Mouse)).